Here is a 72-residue protein sequence, read N- to C-terminus: uncharacterized protein (72 aa).

This is an uncharacterized protein from Rickettsia conorii (strain ATCC VR-613 / Malish 7).